The primary structure comprises 1560 residues: uncharacterized protein (1560 aa).

The disordered stretch occupies residues 1–46; sequence MEEIENAHYQNLENFNDETSEDVNDTSDDINKNNDDNNKYDDNNVN. Acidic residues predominate over residues 15–28; the sequence is FNDETSEDVNDTSD. The span at 29–46 shows a compositional bias: basic and acidic residues; it reads DINKNNDDNNKYDDNNVN. Coiled coils occupy residues 36 to 60 and 317 to 359; these read DNNK…EEDN and KKNN…NNNN. The segment at 568–594 is disordered; that stretch reads KKKKKKNDHHERDSDNNNNDSNNNNYY. The segment covering 583 to 594 has biased composition (low complexity); it reads NNNNDSNNNNYY. Positions 1188 to 1239 form a coiled coil; that stretch reads DTTNNILNKQNESLDNLKKNMYLSKNNYDNQLSSYKNTKQNKTNINEKYNNN. 2 helical membrane-spanning segments follow: residues 1271-1291 and 1314-1334; these read LYIS…FILL and LDYF…ILIS.

It localises to the membrane. This is an uncharacterized protein from Plasmodium falciparum (isolate 3D7).